Here is a 396-residue protein sequence, read N- to C-terminus: 3-hydroxykynurenine transaminase (396 aa).

Residues 43-44 form a binds to and confers specificity for 3-hydroxykynurenine; shared with dimeric partner region; it reads SN. Pyridoxal 5'-phosphate-binding positions include 77–79, serine 154, and glutamine 204; that span reads SAH. Serine 154 provides a ligand contact to substrate. At lysine 205 the chain carries N6-(pyridoxal phosphate)lysine. Pyridoxal 5'-phosphate-binding residues include tyrosine 256 and threonine 259. Arginine 356 serves as a coordination point for substrate.

Belongs to the class-V pyridoxal-phosphate-dependent aminotransferase family. Homodimer. Pyridoxal 5'-phosphate is required as a cofactor. As to expression, expressed in gut and ovaries.

The protein localises to the peroxisome. It catalyses the reaction L-kynurenine + glyoxylate = kynurenate + glycine + H2O. The enzyme catalyses 3-hydroxy-L-kynurenine + glyoxylate = xanthurenate + glycine + H2O. The catalysed reaction is 3-hydroxy-L-kynurenine + pyruvate = xanthurenate + L-alanine + H2O. It carries out the reaction glyoxylate + L-alanine = glycine + pyruvate. The protein operates within amino-acid degradation; L-kynurenine degradation; kynurenate from L-kynurenine: step 1/2. Its function is as follows. Catalyzes the pyridoxal 5'-phosphate-dependent transamination of both 3-hydroxykynurenine and L-kynurenine to xanthurenic acid and kynurenic acid, respectively, preferentially using the alpha-ketoacid glyoxylate as the amino group acceptor. Although glyoxylate is the preferred amino group acceptor, transamination of 3-hydroxykynurenine also works with pyruvate as the amino acceptor in vitro. Involved in the detoxification of cytotoxic metabolite 3-hydroxykynurenine generated by the hydroxylation of L-kynurenine, an intermediate in the tryptophan catabolism pathway. The Plasmodium parasite uses xanthurenic acid produced in the midgut to activate its gametocytes ingested during a blood meal. Also catalyzes, although with a lesser efficiency, the transamination of alanine with glyoxylate as an amino group acceptor. May play a role in the detoxification of glyoxylate, a toxic plant metabolite from the diet. The chain is 3-hydroxykynurenine transaminase from Anopheles gambiae (African malaria mosquito).